The sequence spans 409 residues: Argininosuccinate synthase (409 aa).

ATP contacts are provided by residues 15–23 (AYSGGLDTS) and A42. L-citrulline contacts are provided by Y93 and S98. G123 is an ATP binding site. 3 residues coordinate L-aspartate: T125, N129, and D130. N129 is an L-citrulline binding site. L-citrulline contacts are provided by R133, S182, S191, E267, and Y279.

This sequence belongs to the argininosuccinate synthase family. Type 1 subfamily. Homotetramer.

Its subcellular location is the cytoplasm. The enzyme catalyses L-citrulline + L-aspartate + ATP = 2-(N(omega)-L-arginino)succinate + AMP + diphosphate + H(+). Its pathway is amino-acid biosynthesis; L-arginine biosynthesis; L-arginine from L-ornithine and carbamoyl phosphate: step 2/3. This chain is Argininosuccinate synthase, found in Desulfitobacterium hafniense (strain Y51).